The chain runs to 243 residues: 3-deoxy-manno-octulosonate cytidylyltransferase (243 aa).

The protein belongs to the KdsB family.

The protein resides in the cytoplasm. It carries out the reaction 3-deoxy-alpha-D-manno-oct-2-ulosonate + CTP = CMP-3-deoxy-beta-D-manno-octulosonate + diphosphate. The protein operates within nucleotide-sugar biosynthesis; CMP-3-deoxy-D-manno-octulosonate biosynthesis; CMP-3-deoxy-D-manno-octulosonate from 3-deoxy-D-manno-octulosonate and CTP: step 1/1. It functions in the pathway bacterial outer membrane biogenesis; lipopolysaccharide biosynthesis. In terms of biological role, activates KDO (a required 8-carbon sugar) for incorporation into bacterial lipopolysaccharide in Gram-negative bacteria. The sequence is that of 3-deoxy-manno-octulosonate cytidylyltransferase from Bartonella quintana (strain Toulouse) (Rochalimaea quintana).